Consider the following 307-residue polypeptide: 4-hydroxythreonine-4-phosphate dehydrogenase (307 aa).

Positions 126 and 127 each coordinate substrate. The a divalent metal cation site is built by histidine 156, histidine 195, and histidine 251. Substrate-binding residues include lysine 259, asparagine 268, and arginine 277.

This sequence belongs to the PdxA family. As to quaternary structure, homodimer. Zn(2+) is required as a cofactor. It depends on Mg(2+) as a cofactor. The cofactor is Co(2+).

Its subcellular location is the cytoplasm. It catalyses the reaction 4-(phosphooxy)-L-threonine + NAD(+) = 3-amino-2-oxopropyl phosphate + CO2 + NADH. It participates in cofactor biosynthesis; pyridoxine 5'-phosphate biosynthesis; pyridoxine 5'-phosphate from D-erythrose 4-phosphate: step 4/5. In terms of biological role, catalyzes the NAD(P)-dependent oxidation of 4-(phosphooxy)-L-threonine (HTP) into 2-amino-3-oxo-4-(phosphooxy)butyric acid which spontaneously decarboxylates to form 3-amino-2-oxopropyl phosphate (AHAP). The chain is 4-hydroxythreonine-4-phosphate dehydrogenase from Helicobacter pylori (strain P12).